Reading from the N-terminus, the 367-residue chain is Phosphoribosylaminoimidazole-succinocarboxamide synthase (367 aa).

This sequence belongs to the SAICAR synthetase family.

It carries out the reaction 5-amino-1-(5-phospho-D-ribosyl)imidazole-4-carboxylate + L-aspartate + ATP = (2S)-2-[5-amino-1-(5-phospho-beta-D-ribosyl)imidazole-4-carboxamido]succinate + ADP + phosphate + 2 H(+). The protein operates within purine metabolism; IMP biosynthesis via de novo pathway; 5-amino-1-(5-phospho-D-ribosyl)imidazole-4-carboxamide from 5-amino-1-(5-phospho-D-ribosyl)imidazole-4-carboxylate: step 1/2. The chain is Phosphoribosylaminoimidazole-succinocarboxamide synthase from Shewanella baltica (strain OS155 / ATCC BAA-1091).